The primary structure comprises 421 residues: Lipid II:glycine glycyltransferase (421 aa).

The protein belongs to the FemABX family. In terms of assembly, monomer.

Its subcellular location is the cytoplasm. It carries out the reaction beta-D-GlcNAc-(1-&gt;4)-Mur2Ac(oyl-L-Ala-D-isoglutaminyl-L-Lys-D-Ala-D-Ala)-di-trans,octa-cis-undecaprenyl diphosphate + glycyl-tRNA(Gly) = beta-D-GlcNAc-(1-&gt;4)-Mur2Ac(oyl-L-Ala-D-isoglutaminyl-L-Lys-(N(6)-Gly)-D-Ala-D-Ala)-di-trans,octa-cis-undecaprenyl diphosphate + tRNA(Gly) + H(+). Catalyzes the incorporation of the first glycine of the pentaglycine interpeptide bridge, which is characteristic of the S.aureus peptidoglycan. This glycine is added to the epsilon-amino group of the L-lysine of the membrane-bound lipid II intermediate (GlcNAc-(beta-1,4)-N-acetylmuramic acid(-L-Ala-D-iGln-L-Lys-D-Ala-D-Ala)-pyrophosphoryl-undecaprenol), using glycyl-tRNA(Gly) as donor, in a ribosome-independent mechanism. Involved in methicillin resistance. The chain is Lipid II:glycine glycyltransferase (femX) from Staphylococcus aureus (strain COL).